We begin with the raw amino-acid sequence, 179 residues long: Ribosome maturation factor RimM (179 aa).

One can recognise a PRC barrel domain in the interval 102 to 175; that stretch reads VEMWWDRDLV…RIVVDPPPGL (74 aa).

The protein belongs to the RimM family. Binds ribosomal protein uS19.

The protein localises to the cytoplasm. In terms of biological role, an accessory protein needed during the final step in the assembly of 30S ribosomal subunit, possibly for assembly of the head region. Essential for efficient processing of 16S rRNA. May be needed both before and after RbfA during the maturation of 16S rRNA. It has affinity for free ribosomal 30S subunits but not for 70S ribosomes. This Frankia casuarinae (strain DSM 45818 / CECT 9043 / HFP020203 / CcI3) protein is Ribosome maturation factor RimM.